The primary structure comprises 258 residues: Global transcriptional regulator CodY (258 aa).

The segment at 1–156 (MSSLLEKTRQ…SATIIGLEIL (156 aa)) is GAF domain. A DNA-binding region (H-T-H motif) is located at residues 204 to 223 (ASKIADKVGITRSVIVNALR).

This sequence belongs to the CodY family.

The protein localises to the cytoplasm. Its function is as follows. DNA-binding global transcriptional regulator which is involved in the adaptive response to starvation and acts by directly or indirectly controlling the expression of numerous genes in response to nutrient availability. During rapid exponential growth, CodY is highly active and represses genes whose products allow adaptation to nutrient depletion. This chain is Global transcriptional regulator CodY, found in Clostridium tetani (strain Massachusetts / E88).